The chain runs to 295 residues: Transcription factor MYB34 (295 aa).

HTH myb-type domains lie at 9–61 (EEGI…ANYL) and 62–116 (RPDI…KKRL). 2 consecutive DNA-binding regions (H-T-H motif) follow at residues 37 to 61 (WRTL…ANYL) and 89 to 112 (WAAI…NTNL).

As to quaternary structure, can form complexes with MYC2, MYC3 or MYC4. Expressed in trichomes.

The protein localises to the nucleus. In terms of biological role, transcription factor involved in tryptophan gene activation and in indole-3-acetic acid (IAA) and indolic glucosinolates (IG) biosynthesis. Acts as a direct transcriptional activator of both Trp synthesis genes and Trp secondary metabolism genes. This Arabidopsis thaliana (Mouse-ear cress) protein is Transcription factor MYB34 (MYB34).